The primary structure comprises 302 residues: Glycine--tRNA ligase alpha subunit (302 aa).

Belongs to the class-II aminoacyl-tRNA synthetase family. Tetramer of two alpha and two beta subunits.

The protein resides in the cytoplasm. The enzyme catalyses tRNA(Gly) + glycine + ATP = glycyl-tRNA(Gly) + AMP + diphosphate. The protein is Glycine--tRNA ligase alpha subunit of Haemophilus ducreyi (strain 35000HP / ATCC 700724).